A 414-amino-acid polypeptide reads, in one-letter code: 26S proteasome regulatory subunit 8 homolog (414 aa).

Residue 197-204 (GPPGTGKT) coordinates ATP.

It belongs to the AAA ATPase family.

The protein resides in the cytoplasm. The protein localises to the nucleus. Functionally, the 26S proteasome is involved in the ATP-dependent degradation of ubiquitinated proteins. The regulatory (or ATPase) complex confers ATP dependency and substrate specificity to the 26S complex. In Naegleria fowleri (Brain eating amoeba), this protein is 26S proteasome regulatory subunit 8 homolog.